The sequence spans 503 residues: ATP synthase subunit alpha (503 aa).

An ATP-binding site is contributed by 169–176; that stretch reads GDRSTGKT.

It belongs to the ATPase alpha/beta chains family. As to quaternary structure, F-type ATPases have 2 components, CF(1) - the catalytic core - and CF(0) - the membrane proton channel. CF(1) has five subunits: alpha(3), beta(3), gamma(1), delta(1), epsilon(1). CF(0) has three main subunits: a(1), b(2) and c(9-12). The alpha and beta chains form an alternating ring which encloses part of the gamma chain. CF(1) is attached to CF(0) by a central stalk formed by the gamma and epsilon chains, while a peripheral stalk is formed by the delta and b chains.

The protein resides in the cell membrane. It catalyses the reaction ATP + H2O + 4 H(+)(in) = ADP + phosphate + 5 H(+)(out). In terms of biological role, produces ATP from ADP in the presence of a proton gradient across the membrane. The alpha chain is a regulatory subunit. This is ATP synthase subunit alpha from Dehalococcoides mccartyi (strain ATCC BAA-2266 / KCTC 15142 / 195) (Dehalococcoides ethenogenes (strain 195)).